The sequence spans 293 residues: Ethanolamine ammonia-lyase small subunit (293 aa).

The adenosylcob(III)alamin site is built by Val207 and Glu228.

This sequence belongs to the EutC family. As to quaternary structure, the basic unit is a heterodimer which dimerizes to form tetramers. The heterotetramers trimerize; 6 large subunits form a core ring with 6 small subunits projecting outwards. It depends on adenosylcob(III)alamin as a cofactor.

It localises to the bacterial microcompartment. It catalyses the reaction ethanolamine = acetaldehyde + NH4(+). It participates in amine and polyamine degradation; ethanolamine degradation. Its function is as follows. Catalyzes the deamination of various vicinal amino-alcohols to oxo compounds. Allows this organism to utilize ethanolamine as the sole source of nitrogen and carbon in the presence of external vitamin B12. The protein is Ethanolamine ammonia-lyase small subunit of Clostridioides difficile (strain 630) (Peptoclostridium difficile).